The following is a 770-amino-acid chain: Protein argonaute (770 aa).

Positions 1–151 are N-terminal domain; it reads MKAKVVINLV…VIHIIHQIQS (151 aa). Positions 154–272 constitute a PAZ domain; the sequence is TLWELVNKDP…LLPQLVVPTY (119 aa). An interdomain connector region spans residues 276–361; that stretch reads QLESDVAKEI…SQLLLWTNYS (86 aa). The segment at 362 to 544 is mid domain; the sequence is RKYPVILPYE…LSKLGVKYYV (183 aa). The 284-residue stretch at 473–756 folds into the Piwi domain; the sequence is GLAFIAARNK…FANAIRNEWK (284 aa). Catalysis depends on residues aspartate 558, glutamate 596, aspartate 628, and histidine 745. Aspartate 558 contacts Mn(2+). Mn(2+)-binding residues include aspartate 628, histidine 745, and valine 770.

This sequence belongs to the argonaute family. Long pAgo subfamily. In terms of assembly, monomer. Mn(2+) serves as cofactor.

Inhibited at greater than 500 mM NaCl. Functionally, a DNA-guided ssDNA endonuclease that may play a role in defense against invading mobile genetic elements. Uses short 5'-phospho-ssDNA sequences as guides (gDNA) to bind complementary target strands, resulting in cleavage of the target DNA (tDNA). Endonucleolytically cleaves DNA in short dsDNA (the gDNA indicates where to cleave on the tDNA). Efficient guide-dependent target DNA cleavage requires a minimal gDNA length of 15 nucleotides (nt) and works up to at least 31 nt. Overexpression decreases plasmid transformation efficiency. Has no appreciable activity with gRNA or on target RNA. Also has guide-independent activity on plasmid DNA called 'chopping'. The cleavage site is 10 nucleotides (nt) downstream of the target residue base-paired with the 5'-end of the gDNA, cleavage is insensitive to adenine methylation. DNA cleavage produces 5'-phosphomonoesters (as it can be ligated by T4 DNA ligase). This chain is Protein argonaute, found in Pyrococcus furiosus (strain ATCC 43587 / DSM 3638 / JCM 8422 / Vc1).